A 506-amino-acid chain; its full sequence is ATP synthase subunit alpha, chloroplastic (506 aa).

172–179 (GDRQTGKT) provides a ligand contact to ATP.

Belongs to the ATPase alpha/beta chains family. F-type ATPases have 2 components, CF(1) - the catalytic core - and CF(0) - the membrane proton channel. CF(1) has five subunits: alpha(3), beta(3), gamma(1), delta(1), epsilon(1). CF(0) has four main subunits: a, b, b' and c.

Its subcellular location is the plastid. It localises to the chloroplast thylakoid membrane. The enzyme catalyses ATP + H2O + 4 H(+)(in) = ADP + phosphate + 5 H(+)(out). In terms of biological role, produces ATP from ADP in the presence of a proton gradient across the membrane. The alpha chain is a regulatory subunit. This Pleurastrum terricola (Filamentous green alga) protein is ATP synthase subunit alpha, chloroplastic.